The sequence spans 1200 residues: uncharacterized protein (1200 aa).

Disordered regions lie at residues 282 to 302 (SQES…GCTS), 323 to 372 (LSEA…PQGS), 392 to 491 (SQEP…KASL), 510 to 568 (RAKS…RIGA), and 1056 to 1200 (SCPE…LASL). The span at 420 to 435 (ASSPRLSPASPAAAAS) shows a compositional bias: low complexity. The span at 437-448 (TKIEVKTKERNG) shows a compositional bias: basic and acidic residues. Polar residues predominate over residues 518-527 (GTTQTKTSGP). Positions 1137-1153 (EDGKGSHKLPDPAREHL) are enriched in basic and acidic residues. Over residues 1160-1171 (RQQPPRQSQVPR) the composition is skewed to low complexity. Residues 1175-1200 (GSFSSEGTDSQTSLEDSPQTSPLASL) are compositionally biased toward polar residues.

This is an uncharacterized protein from Homo sapiens (Human).